Here is a 234-residue protein sequence, read N- to C-terminus: Peptidase E (234 aa).

Catalysis depends on charge relay system residues Ser-123, Asp-138, and His-160.

This sequence belongs to the peptidase S51 family.

The protein resides in the cytoplasm. The catalysed reaction is Dipeptidase E catalyzes the hydrolysis of dipeptides Asp-|-Xaa. It does not act on peptides with N-terminal Glu, Asn or Gln, nor does it cleave isoaspartyl peptides.. Functionally, hydrolyzes dipeptides containing N-terminal aspartate residues. May play a role in allowing the cell to use peptide aspartate to spare carbon otherwise required for the synthesis of the aspartate family of amino acids. The chain is Peptidase E from Pasteurella multocida (strain Pm70).